The chain runs to 320 residues: Glutathione synthetase (320 aa).

An ATP-grasp domain is found at 130-315 (KIFISWFSRF…ITGILIDYIE (186 aa)). Residue 156–212 (WKEKNDIILKPLDAMGGKGVFRIKKDDPNFSVIVETLTNYEKKYCMIQTYLPEVQFG) participates in ATP binding. Mg(2+)-binding residues include Glu-286 and Asn-288.

Belongs to the prokaryotic GSH synthase family. The cofactor is Mg(2+). Requires Mn(2+) as cofactor.

It carries out the reaction gamma-L-glutamyl-L-cysteine + glycine + ATP = glutathione + ADP + phosphate + H(+). Its pathway is sulfur metabolism; glutathione biosynthesis; glutathione from L-cysteine and L-glutamate: step 2/2. This Buchnera aphidicola subsp. Schizaphis graminum (strain Sg) protein is Glutathione synthetase.